The primary structure comprises 491 residues: Katanin p60 ATPase-containing subunit A1 (491 aa).

The interaction with KATNB1 stretch occupies residues 1-29 (MSLQMIVENVKLAREYALLGNYDSAMVYY). The tract at residues 1-75 (MSLQMIVENV…VKDIMKTLES (75 aa)) is interaction with dynein and NDEL1. Residues 1–185 (MSLQMIVENV…EPEANKFDGT (185 aa)) are interaction with microtubules; sufficient for microtubule severing activity. Ser42 bears the Phosphoserine; by DYRK2 mark. The segment at 101-182 (PVPVERRPLP…AVTEPEANKF (82 aa)) is disordered. Positions 145–169 (HNDRGKAVRSREKKEQSKGREEKNK) are enriched in basic and acidic residues. ATP is bound at residue 249–256 (GPPGTGKT).

Belongs to the AAA ATPase family. Katanin p60 subunit A1 subfamily. As to quaternary structure, can homooligomerize into hexameric rings, which may be promoted by interaction with microtubules. Interacts with KATNB1, which may serve as a targeting subunit. Interacts with ASPM; the katanin complex formation KATNA1:KATNB1 is required for the association of ASPM. Interacts with dynein and NDEL1. Associates with the E3 ligase complex containing DYRK2, EDD/UBR5, DDB1 and DCAF1 proteins (EDVP complex). Interacts with KLHL42 (via the kelch domains). Interacts with CUL3; the interaction is enhanced by KLHL42. Interacts with KATNB1 and KATNBL1. Interacts with CAMSAP2 and CAMSAP3; leading to regulate the length of CAMSAP-decorated microtubule stretches. Post-translationally, phosphorylation by DYRK2 triggers ubiquitination and subsequent degradation. Ubiquitinated by the BCR(KLHL42) E3 ubiquitin ligase complex, leading to its proteasomal degradation. Ubiquitinated by the EDVP E3 ligase complex and subsequently targeted for proteasomal degradation.

The protein resides in the cytoplasm. The protein localises to the midbody. Its subcellular location is the cytoskeleton. It is found in the microtubule organizing center. It localises to the centrosome. The protein resides in the spindle pole. The protein localises to the spindle. The enzyme catalyses n ATP + n H2O + a microtubule = n ADP + n phosphate + (n+1) alpha/beta tubulin heterodimers.. ATPase activity is stimulated by microtubules, which promote homooligomerization. ATP-dependent microtubule severing is stimulated by interaction with KATNB1. Functionally, catalytic subunit of a complex which severs microtubules in an ATP-dependent manner. Microtubule severing may promote rapid reorganization of cellular microtubule arrays and the release of microtubules from the centrosome following nucleation. Microtubule release from the mitotic spindle poles may allow depolymerization of the microtubule end proximal to the spindle pole, leading to poleward microtubule flux and poleward motion of chromosome. The function in regulating microtubule dynamics at spindle poles seems to depend on the association of the katanin KATNA1:KATNB1 complex with ASPM which recruits it to microtubules. Reversely KATNA1:KATNB1 can enhance ASPM blocking activity on microtubule minus-end growth. Microtubule release within the cell body of neurons may be required for their transport into neuronal processes by microtubule-dependent motor proteins. This transport is required for axonal growth. This is Katanin p60 ATPase-containing subunit A1 (Katna1) from Mus musculus (Mouse).